A 534-amino-acid polypeptide reads, in one-letter code: CTP synthase (534 aa).

The amidoligase domain stretch occupies residues 1–267 (MTKYIFVTGG…GDLIIERLAL (267 aa)). Ser-13 lines the CTP pocket. Ser-13 is a UTP binding site. Residue 14–19 (SVGKGI) participates in ATP binding. Tyr-54 is an L-glutamine binding site. Residue Asp-71 coordinates ATP. 2 residues coordinate Mg(2+): Asp-71 and Glu-141. CTP is bound by residues 148–150 (DIE), 188–193 (KTKPTQ), and Lys-224. UTP contacts are provided by residues 188-193 (KTKPTQ) and Lys-224. The Glutamine amidotransferase type-1 domain occupies 292-534 (TVAIVGKYVE…VQAALEQIAE (243 aa)). Gly-354 is an L-glutamine binding site. The active-site Nucleophile; for glutamine hydrolysis is the Cys-381. L-glutamine is bound by residues 382 to 385 (LGMQ), Glu-405, and Arg-462. Catalysis depends on residues His-507 and Glu-509.

Belongs to the CTP synthase family. Homotetramer.

It catalyses the reaction UTP + L-glutamine + ATP + H2O = CTP + L-glutamate + ADP + phosphate + 2 H(+). It carries out the reaction L-glutamine + H2O = L-glutamate + NH4(+). The catalysed reaction is UTP + NH4(+) + ATP = CTP + ADP + phosphate + 2 H(+). It functions in the pathway pyrimidine metabolism; CTP biosynthesis via de novo pathway; CTP from UDP: step 2/2. With respect to regulation, allosterically activated by GTP, when glutamine is the substrate; GTP has no effect on the reaction when ammonia is the substrate. The allosteric effector GTP functions by stabilizing the protein conformation that binds the tetrahedral intermediate(s) formed during glutamine hydrolysis. Inhibited by the product CTP, via allosteric rather than competitive inhibition. Functionally, catalyzes the ATP-dependent amination of UTP to CTP with either L-glutamine or ammonia as the source of nitrogen. Regulates intracellular CTP levels through interactions with the four ribonucleotide triphosphates. The protein is CTP synthase of Herpetosiphon aurantiacus (strain ATCC 23779 / DSM 785 / 114-95).